We begin with the raw amino-acid sequence, 442 residues long: D-inositol 3-phosphate glycosyltransferase (442 aa).

A 1D-myo-inositol 3-phosphate-binding site is contributed by His15. Residues 21-22 (QP) and Gly29 each bind UDP-N-acetyl-alpha-D-glucosamine. 1D-myo-inositol 3-phosphate is bound by residues 26 to 31 (DAGGMN), Lys84, Tyr117, Thr141, and Arg161. The UDP-N-acetyl-alpha-D-glucosamine site is built by Arg235, Lys240, and Gln299. Residues Tyr308, Arg309, and Ser311 each coordinate Mg(2+). Residues Glu321 and Glu329 each coordinate UDP-N-acetyl-alpha-D-glucosamine. Thr335 contributes to the Mg(2+) binding site.

It belongs to the glycosyltransferase group 1 family. MshA subfamily. Homodimer.

It carries out the reaction 1D-myo-inositol 3-phosphate + UDP-N-acetyl-alpha-D-glucosamine = 1D-myo-inositol 2-acetamido-2-deoxy-alpha-D-glucopyranoside 3-phosphate + UDP + H(+). Functionally, catalyzes the transfer of a N-acetyl-glucosamine moiety to 1D-myo-inositol 3-phosphate to produce 1D-myo-inositol 2-acetamido-2-deoxy-glucopyranoside 3-phosphate in the mycothiol biosynthesis pathway. This Rhodococcus erythropolis (strain PR4 / NBRC 100887) protein is D-inositol 3-phosphate glycosyltransferase.